Reading from the N-terminus, the 171-residue chain is uncharacterized protein (171 aa).

Residues 5-25 (FLLTIFALWVGGFGYYLYLIN) form a helical membrane-spanning segment.

The protein resides in the membrane. This is an uncharacterized protein from Rickettsia conorii (strain ATCC VR-613 / Malish 7).